We begin with the raw amino-acid sequence, 181 residues long: UPF0398 protein LMHCC_0668 (181 aa).

This sequence belongs to the UPF0398 family.

This chain is UPF0398 protein LMHCC_0668, found in Listeria monocytogenes serotype 4a (strain HCC23).